A 196-amino-acid polypeptide reads, in one-letter code: ATP-dependent Clp protease proteolytic subunit (196 aa).

The Nucleophile role is filled by Ser101. His126 is an active-site residue.

It belongs to the peptidase S14 family. In terms of assembly, component of the chloroplastic Clp protease core complex.

It localises to the plastid. It is found in the chloroplast stroma. The enzyme catalyses Hydrolysis of proteins to small peptides in the presence of ATP and magnesium. alpha-casein is the usual test substrate. In the absence of ATP, only oligopeptides shorter than five residues are hydrolyzed (such as succinyl-Leu-Tyr-|-NHMec, and Leu-Tyr-Leu-|-Tyr-Trp, in which cleavage of the -Tyr-|-Leu- and -Tyr-|-Trp bonds also occurs).. Its function is as follows. Cleaves peptides in various proteins in a process that requires ATP hydrolysis. Has a chymotrypsin-like activity. Plays a major role in the degradation of misfolded proteins. The protein is ATP-dependent Clp protease proteolytic subunit of Atropa belladonna (Belladonna).